The primary structure comprises 763 residues: MTTLHNLGFPRIGARRELKQAQEAYWAGDLQQSELEHVGKSLRERHWALQADAGVDLMPVGDFAWYDHILEFSSLLGVVPSRFEQDANAPVNLDTLFRMARGRAPTGTPAAACEMTKWFDTNYHYLVPELAADQTFRIARESLFEQVEEAKAQGHNPKPVIPGPLTYLYLSKGDRFEGAEDSAKLALLDNLIPVYREILQRFANQGVQWVQIDEPILVLDLPDSWQRAYLRVYDQLASASQTKLLLATYFGGLGNNLFTALELPVHGLHLDRVRGNDDLGQVIPRLGDKVLSLGVINGRNIWRTDLDAALDNITALHNELGDRLWLAPSCSLLHCPVDLEQEDTLDNELKSWLSFAKQKLEELALLGGALRGNSNVNSGLQTQRAALQARGLSSRIHNPAVAQRLADASQLSRDRVSPFAERIAQQQHALQLPAFPTTTIGSFPQTREIRTARRDWKAGKLNDAQYQQQMQEEIARCIRYQEEVELDVLVHGEAERNDMVEYFGELLDGFAFTRFGWVQSYGSRCVKPPIIFGDVQRPQAMTVEWARYAQSLTHKPVKGMLTGPVTILQWSFVRDDQPRADTCRQIALALRDEVQDLEKAGIKVIQIDEPALREGLPLRQEEWTQYLDWAVDCFRLATVSVDDDTQIHTHMCYSEFNDIIEAIAALDADVITIETSRSNMELLDAFRDFHYPNDIGPGVYDIHSPNEPDVAWMVQLMEKAAERLPKERLWVNPDCGLKTRKWDETRAALANMVNAAKQLRQAS.

5-methyltetrahydropteroyltri-L-glutamate is bound by residues Arg-16–Lys-19 and Lys-117. Residues Ile-440–Ser-442 and Glu-493 each bind L-homocysteine. Residues Ile-440–Ser-442 and Glu-493 contribute to the L-methionine site. Residues Arg-524 to Cys-525 and Trp-570 each bind 5-methyltetrahydropteroyltri-L-glutamate. Asp-608 provides a ligand contact to L-homocysteine. Position 608 (Asp-608) interacts with L-methionine. Position 614 (Glu-614) interacts with 5-methyltetrahydropteroyltri-L-glutamate. Zn(2+) is bound by residues His-650, Cys-652, and Glu-674. His-703 (proton donor) is an active-site residue. Cys-735 provides a ligand contact to Zn(2+).

This sequence belongs to the vitamin-B12 independent methionine synthase family. Requires Zn(2+) as cofactor.

The catalysed reaction is 5-methyltetrahydropteroyltri-L-glutamate + L-homocysteine = tetrahydropteroyltri-L-glutamate + L-methionine. The protein operates within amino-acid biosynthesis; L-methionine biosynthesis via de novo pathway; L-methionine from L-homocysteine (MetE route): step 1/1. Catalyzes the transfer of a methyl group from 5-methyltetrahydrofolate to homocysteine resulting in methionine formation. The protein is 5-methyltetrahydropteroyltriglutamate--homocysteine methyltransferase of Alcanivorax borkumensis (strain ATCC 700651 / DSM 11573 / NCIMB 13689 / SK2).